The sequence spans 55 residues: uncharacterized protein (55 aa).

This is an uncharacterized protein from Clostridium perfringens.